The chain runs to 653 residues: 1-deoxy-D-xylulose-5-phosphate synthase (653 aa).

Residues histidine 86 and 127-129 contribute to the thiamine diphosphate site; that span reads GHS. Residue aspartate 158 coordinates Mg(2+). Thiamine diphosphate is bound by residues 159–160, asparagine 187, and phenylalanine 294; that span reads GA. Asparagine 187 is a Mg(2+) binding site. The segment covering 309–324 has biased composition (basic and acidic residues); the sequence is KLEKTTSEPPPKKEPR. Residues 309–343 are disordered; it reads KLEKTTSEPPPKKEPRSPNAATAEPEAQPKPQPKP. Residue glutamate 395 participates in thiamine diphosphate binding.

It belongs to the transketolase family. DXPS subfamily. As to quaternary structure, homodimer. It depends on Mg(2+) as a cofactor. The cofactor is thiamine diphosphate.

The enzyme catalyses D-glyceraldehyde 3-phosphate + pyruvate + H(+) = 1-deoxy-D-xylulose 5-phosphate + CO2. It participates in metabolic intermediate biosynthesis; 1-deoxy-D-xylulose 5-phosphate biosynthesis; 1-deoxy-D-xylulose 5-phosphate from D-glyceraldehyde 3-phosphate and pyruvate: step 1/1. Functionally, catalyzes the acyloin condensation reaction between C atoms 2 and 3 of pyruvate and glyceraldehyde 3-phosphate to yield 1-deoxy-D-xylulose-5-phosphate (DXP). This chain is 1-deoxy-D-xylulose-5-phosphate synthase, found in Chromohalobacter salexigens (strain ATCC BAA-138 / DSM 3043 / CIP 106854 / NCIMB 13768 / 1H11).